A 394-amino-acid chain; its full sequence is Elongation factor Tu (394 aa).

The tr-type G domain occupies 10-204 (KPHVNVGTIG…ALDSYIPEPE (195 aa)). The tract at residues 19 to 26 (GHVDHGKT) is G1. 19 to 26 (GHVDHGKT) is a GTP binding site. Thr-26 is a binding site for Mg(2+). The G2 stretch occupies residues 60-64 (GITIN). The interval 81–84 (DCPG) is G3. GTP is bound by residues 81 to 85 (DCPGH) and 136 to 139 (NKCD). A G4 region spans residues 136–139 (NKCD). The segment at 174–176 (SAL) is G5.

This sequence belongs to the TRAFAC class translation factor GTPase superfamily. Classic translation factor GTPase family. EF-Tu/EF-1A subfamily. As to quaternary structure, monomer.

It is found in the cytoplasm. The catalysed reaction is GTP + H2O = GDP + phosphate + H(+). GTP hydrolase that promotes the GTP-dependent binding of aminoacyl-tRNA to the A-site of ribosomes during protein biosynthesis. This is Elongation factor Tu from Sodalis glossinidius (strain morsitans).